The primary structure comprises 217 residues: UPF0502 protein ESA_02280 (217 aa).

It belongs to the UPF0502 family.

The polypeptide is UPF0502 protein ESA_02280 (Cronobacter sakazakii (strain ATCC BAA-894) (Enterobacter sakazakii)).